Reading from the N-terminus, the 213-residue chain is Octanoyltransferase (213 aa).

The region spanning 32 to 207 (DHTPDEIWLV…KLLALLNNPP (176 aa)) is the BPL/LPL catalytic domain. Residues 71–78 (RGGQVTYH), 138–140 (SLG), and 151–153 (GLA) contribute to the substrate site. Catalysis depends on C169, which acts as the Acyl-thioester intermediate.

It belongs to the LipB family.

It localises to the cytoplasm. It catalyses the reaction octanoyl-[ACP] + L-lysyl-[protein] = N(6)-octanoyl-L-lysyl-[protein] + holo-[ACP] + H(+). It functions in the pathway protein modification; protein lipoylation via endogenous pathway; protein N(6)-(lipoyl)lysine from octanoyl-[acyl-carrier-protein]: step 1/2. Its function is as follows. Catalyzes the transfer of endogenously produced octanoic acid from octanoyl-acyl-carrier-protein onto the lipoyl domains of lipoate-dependent enzymes. Lipoyl-ACP can also act as a substrate although octanoyl-ACP is likely to be the physiological substrate. The polypeptide is Octanoyltransferase (Enterobacter sp. (strain 638)).